Here is a 227-residue protein sequence, read N- to C-terminus: Atypical response regulator protein ChxR (227 aa).

The region spanning 6–108 is the Response regulatory domain; the sequence is HVLLVSEHWD…ILKSAISLFL (103 aa). Residues 117–213 constitute a DNA-binding region (ompR/PhoB-type); the sequence is PESIRFGPNV…LRGVGYLFSD (97 aa).

As to quaternary structure, homodimer.

May be a global positive regulator of transcription. Binds a cis-acting element of its own promoter DNA sequence and is hence probably also involved in its own transcription activation. The recognition sequence is 5'-WHGAWNH-N(3-5)-WHGAWNH-3', where W is A/T, H is C/A/T, N is G/C/A/T and the linker length in the middle is 3 to 5 nucleotides. The polypeptide is Atypical response regulator protein ChxR (Chlamydia trachomatis serovar L2 (strain ATCC VR-902B / DSM 19102 / 434/Bu)).